Consider the following 359-residue polypeptide: MQVLRHSEHTLKTALLSKNPVLVSQYEKLDAGEQRLMNEAFQPRSNLFEPITVHSQSDWISSHPEAPQDFEQFFSDRYRKAPCPKKHIIYIQSIGSLGNTRVISEEYIKWLKGYCEAFFYGLKVKFLEPVSVSETKCSFRVNEHTQNLQIHTGHILAFLKKNKPEDAFCIVGITMIDLYPRDSWNFVFGQASLSSGVGIFSFARYGKDFYTSKYEGNVTSLQLTSPTDYSIFDNYYIPEITSVLLLRSCKTLTHEIGHILGLRHCQWLACLMQGSNHLEESDRRPLNVCPICLRKLQSAIGFNIVERYRALVKWIDDESCNESGATPKSSSEHAHLPKPVEAFKDWREWLMRCIALLEK.

Residue His254 participates in Zn(2+) binding. Glu255 functions as the Proton acceptor in the catalytic mechanism. Positions 258, 264, 265, 270, 289, and 292 each coordinate Zn(2+).

It belongs to the peptidase M54 family. Zn(2+) serves as cofactor. In terms of tissue distribution, predominantly expressed in testis.

In terms of biological role, probable zinc metalloprotease. This Mus musculus (Mouse) protein is Archaemetzincin-2 (Amz2).